The sequence spans 290 residues: 33 kDa chaperonin (290 aa).

Cystine bridges form between Cys231–Cys233 and Cys263–Cys266.

It belongs to the HSP33 family. Post-translationally, under oxidizing conditions two disulfide bonds are formed involving the reactive cysteines. Under reducing conditions zinc is bound to the reactive cysteines and the protein is inactive.

It is found in the cytoplasm. In terms of biological role, redox regulated molecular chaperone. Protects both thermally unfolding and oxidatively damaged proteins from irreversible aggregation. Plays an important role in the bacterial defense system toward oxidative stress. This chain is 33 kDa chaperonin, found in Thermotoga petrophila (strain ATCC BAA-488 / DSM 13995 / JCM 10881 / RKU-1).